A 726-amino-acid chain; its full sequence is Phenylalanine--tRNA ligase beta subunit (726 aa).

Residues Phe38–Ser150 enclose the tRNA-binding domain. The 74-residue stretch at Asp394 to Glu467 folds into the B5 domain. Residues Asp445, Asp451, Glu454, and Glu455 each coordinate Mg(2+).

The protein belongs to the phenylalanyl-tRNA synthetase beta subunit family. Type 1 subfamily. In terms of assembly, tetramer of two alpha and two beta subunits. The cofactor is Mg(2+).

The protein resides in the cytoplasm. It carries out the reaction tRNA(Phe) + L-phenylalanine + ATP = L-phenylalanyl-tRNA(Phe) + AMP + diphosphate + H(+). The sequence is that of Phenylalanine--tRNA ligase beta subunit from Mycoplasmopsis synoviae (strain 53) (Mycoplasma synoviae).